Reading from the N-terminus, the 415-residue chain is F-box/kelch-repeat protein At2g29600 (415 aa).

A disordered region spans residues 1 to 58 (MASISETSDDGSNGGDPNQKPEEPHKNPQEGKEEENQNEKPKEDDHQEEEVENVPQIP). The segment covering 19 to 45 (QKPEEPHKNPQEGKEEENQNEKPKEDD) has biased composition (basic and acidic residues). An F-box domain is found at 56 to 103 (QIPPQMPLELIVSTIATLRRCHYPTLSLLSDSFRQVISSVDLFQTRSL). Kelch repeat units lie at residues 161–208 (KIYV…VIDG), 210–254 (IYVV…FNVH), 260–309 (KIYI…AVVP), and 311–355 (HLHV…KLMI).

This chain is F-box/kelch-repeat protein At2g29600, found in Arabidopsis thaliana (Mouse-ear cress).